A 503-amino-acid polypeptide reads, in one-letter code: Cytochrome P450 7A1 (503 aa).

A helical membrane pass occupies residues 4-24 (ISLIWGIAVLVSCCIWFIVGI). Position 444 (Cys444) interacts with heme.

The protein belongs to the cytochrome P450 family. It depends on heme as a cofactor. In terms of tissue distribution, detected in liver (at protein level). Liver.

The protein localises to the endoplasmic reticulum membrane. The protein resides in the microsome membrane. The enzyme catalyses cholesterol + reduced [NADPH--hemoprotein reductase] + O2 = 7alpha-hydroxycholesterol + oxidized [NADPH--hemoprotein reductase] + H2O + H(+). It catalyses the reaction 4beta-hydroxycholesterol + reduced [NADPH--hemoprotein reductase] + O2 = 4beta,7alpha-dihydroxycholesterol + oxidized [NADPH--hemoprotein reductase] + H2O + H(+). It carries out the reaction lathosterol + reduced [NADPH--hemoprotein reductase] + O2 = 7alpha,8alpha-epoxy-5alpha-cholestan-3beta-ol + oxidized [NADPH--hemoprotein reductase] + H2O + H(+). The catalysed reaction is lathosterol + reduced [NADPH--hemoprotein reductase] + O2 = 5alpha-cholestan-7-oxo-3beta-ol + oxidized [NADPH--hemoprotein reductase] + H2O + H(+). The enzyme catalyses 7-dehydrocholesterol + reduced [NADPH--hemoprotein reductase] + O2 = 7-oxocholesterol + oxidized [NADPH--hemoprotein reductase] + H2O + H(+). It catalyses the reaction (24S)-hydroxycholesterol + reduced [NADPH--hemoprotein reductase] + O2 = (24S)-7alpha-dihydroxycholesterol + oxidized [NADPH--hemoprotein reductase] + H2O + H(+). It carries out the reaction (24R)-hydroxycholesterol + reduced [NADPH--hemoprotein reductase] + O2 = (24R)-7alpha-dihydroxycholesterol + oxidized [NADPH--hemoprotein reductase] + H2O + H(+). It participates in lipid metabolism; bile acid biosynthesis. The protein operates within steroid metabolism; cholesterol degradation. Its function is as follows. A cytochrome P450 monooxygenase involved in the metabolism of endogenous cholesterol and its oxygenated derivatives (oxysterols). Mechanistically, uses molecular oxygen inserting one oxygen atom into a substrate, and reducing the second into a water molecule, with two electrons provided by NADPH via cytochrome P450 reductase (CPR; NADPH-ferrihemoprotein reductase). Functions as a critical regulatory enzyme of bile acid biosynthesis and cholesterol homeostasis. Catalyzes the hydroxylation of carbon hydrogen bond at 7-alpha position of cholesterol, a rate-limiting step in cholesterol catabolism and bile acid biosynthesis. 7-alpha hydroxylates several oxysterols, including 4beta-hydroxycholesterol and 24-hydroxycholesterol. Catalyzes the oxidation of the 7,8 double bond of 7-dehydrocholesterol and lathosterol with direct and predominant formation of the 7-keto derivatives. The protein is Cytochrome P450 7A1 (Cyp7a1) of Rattus norvegicus (Rat).